A 265-amino-acid chain; its full sequence is MSDMITAAILGLVEGLTEFLPVSSTGHLIITGELLGFTGPKAATFEVAIQLGAILAVVVLYWDRFWGLLRPQPYVRFAGLRGIMLLLLTSLPASVLGLAAHSTIKAHLFTPSTVAIALAVGAIFMLLVERRTERPRYMTLDEMSPALALGIGCFQCLALWPGFSRSAATIMGGMLLGARRGLAAEYSFIAAVPIMFAATGYDLLKSWTLFTPADLPFFATGFVVSFLSAWAAVKLFIALVGRMTFRPFAWYRLAIAPLVYYFMAY.

Helical transmembrane passes span 42–62 (AATF…VLYW), 82–102 (GIML…AAHS), 108–128 (LFTP…MLLV), 143–163 (MSPA…WPGF), 181–201 (GLAA…ATGY), 221–241 (GFVV…ALVG), and 248–264 (FAWY…YFMA).

Belongs to the UppP family.

Its subcellular location is the cell inner membrane. The catalysed reaction is di-trans,octa-cis-undecaprenyl diphosphate + H2O = di-trans,octa-cis-undecaprenyl phosphate + phosphate + H(+). In terms of biological role, catalyzes the dephosphorylation of undecaprenyl diphosphate (UPP). Confers resistance to bacitracin. The polypeptide is Undecaprenyl-diphosphatase (Nitratidesulfovibrio vulgaris (strain DP4) (Desulfovibrio vulgaris)).